The following is a 121-amino-acid chain: NADH-ubiquinone oxidoreductase chain 3 (121 aa).

Transmembrane regions (helical) follow at residues 11–31, 63–83, and 90–110; these read ILTFFAISFSISTLILALSYF, FYLVAILFLIFDLEISFLFPW, and LSIFGFWSMIVFLIILTLGFI.

This sequence belongs to the complex I subunit 3 family.

The protein resides in the mitochondrion membrane. The catalysed reaction is a ubiquinone + NADH + 5 H(+)(in) = a ubiquinol + NAD(+) + 4 H(+)(out). In terms of biological role, core subunit of the mitochondrial membrane respiratory chain NADH dehydrogenase (Complex I) that is believed to belong to the minimal assembly required for catalysis. Complex I functions in the transfer of electrons from NADH to the respiratory chain. The immediate electron acceptor for the enzyme is believed to be ubiquinone. This Porphyra purpurea (Red seaweed) protein is NADH-ubiquinone oxidoreductase chain 3 (NAD3).